We begin with the raw amino-acid sequence, 196 residues long: MKYAQYVFLASIFSAVEYSLAQTCAVDSFSVKDNFDPKRYAGKWYALAKKDPEGLFLQDNISAEYTVEEDGTMTASSKGRVKLFGFWVICADMAAQYTVPDPTTPAKMYMTYQGLASYLSSGGDNYWVIDTDYDNYAITYACRSLKEDGSCDDGYSLIFSRNPRGLPPAIQRIVRQKQEEICMSGQFQPVLQSGAC.

A signal peptide spans 1–21; that stretch reads MKYAQYVFLASIFSAVEYSLA. Cystine bridges form between cysteine 24–cysteine 182, cysteine 90–cysteine 196, and cysteine 142–cysteine 151.

The protein belongs to the calycin superfamily. Lipocalin family.

Its subcellular location is the secreted. It is found in the extracellular space. The protein localises to the extracellular matrix. The protein resides in the interphotoreceptor matrix. Its function is as follows. May be involved in the transport of retinol between the photoreceptors and the pigmented epithelium. This Gallus gallus (Chicken) protein is Purpurin.